Here is a 76-residue protein sequence, read N- to C-terminus: Small ribosomal subunit protein bS18 (76 aa).

It belongs to the bacterial ribosomal protein bS18 family. Part of the 30S ribosomal subunit. Forms a tight heterodimer with protein bS6.

Functionally, binds as a heterodimer with protein bS6 to the central domain of the 16S rRNA, where it helps stabilize the platform of the 30S subunit. This is Small ribosomal subunit protein bS18 from Alkaliphilus metalliredigens (strain QYMF).